The chain runs to 304 residues: UDP-3-O-acyl-N-acetylglucosamine deacetylase (304 aa).

3 residues coordinate Zn(2+): His79, His238, and Asp242. Catalysis depends on His265, which acts as the Proton donor.

It belongs to the LpxC family. Requires Zn(2+) as cofactor.

The enzyme catalyses a UDP-3-O-[(3R)-3-hydroxyacyl]-N-acetyl-alpha-D-glucosamine + H2O = a UDP-3-O-[(3R)-3-hydroxyacyl]-alpha-D-glucosamine + acetate. Its pathway is glycolipid biosynthesis; lipid IV(A) biosynthesis; lipid IV(A) from (3R)-3-hydroxytetradecanoyl-[acyl-carrier-protein] and UDP-N-acetyl-alpha-D-glucosamine: step 2/6. In terms of biological role, catalyzes the hydrolysis of UDP-3-O-myristoyl-N-acetylglucosamine to form UDP-3-O-myristoylglucosamine and acetate, the committed step in lipid A biosynthesis. The protein is UDP-3-O-acyl-N-acetylglucosamine deacetylase of Photobacterium profundum (strain SS9).